Reading from the N-terminus, the 443-residue chain is ATP-dependent protease ATPase subunit HslU (443 aa).

Residues I18, G60–E65, D256, E321, and R393 contribute to the ATP site.

This sequence belongs to the ClpX chaperone family. HslU subfamily. As to quaternary structure, a double ring-shaped homohexamer of HslV is capped on each side by a ring-shaped HslU homohexamer. The assembly of the HslU/HslV complex is dependent on binding of ATP.

The protein localises to the cytoplasm. ATPase subunit of a proteasome-like degradation complex; this subunit has chaperone activity. The binding of ATP and its subsequent hydrolysis by HslU are essential for unfolding of protein substrates subsequently hydrolyzed by HslV. HslU recognizes the N-terminal part of its protein substrates and unfolds these before they are guided to HslV for hydrolysis. In Enterobacter sp. (strain 638), this protein is ATP-dependent protease ATPase subunit HslU.